Consider the following 136-residue polypeptide: Protein PsiE homolog (136 aa).

Transmembrane regions (helical) follow at residues 15 to 35, 58 to 78, 82 to 102, and 108 to 128; these read AMQA…VVFL, VEGL…VKYF, FHFP…RLII, and PLAV…LWLC.

It belongs to the PsiE family.

It localises to the cell inner membrane. The protein is Protein PsiE homolog of Klebsiella pneumoniae subsp. pneumoniae (strain ATCC 700721 / MGH 78578).